The primary structure comprises 222 residues: Superoxide dismutase [Mn], mitochondrial (222 aa).

The transit peptide at 1–24 (MLCRAACSAGRRLGPAASTAGSRH) directs the protein to the mitochondrion. His50 provides a ligand contact to Mn(2+). Residue Tyr58 is modified to 3'-nitrotyrosine. Lys68 and Lys75 each carry N6-acetyllysine; alternate. 2 positions are modified to N6-succinyllysine; alternate: Lys68 and Lys75. His98 is a binding site for Mn(2+). Lys114 is subject to N6-acetyllysine. Residues Lys122 and Lys130 each carry the N6-acetyllysine; alternate modification. N6-succinyllysine; alternate is present on residues Lys122 and Lys130. 2 residues coordinate Mn(2+): Asp183 and His187. N6-acetyllysine is present on Lys202.

Belongs to the iron/manganese superoxide dismutase family. As to quaternary structure, homotetramer. Mn(2+) is required as a cofactor. Nitrated under oxidative stress. Nitration coupled with oxidation inhibits the catalytic activity. In terms of processing, acetylation at Lys-122 decreases enzymatic activity. Deacetylated by SIRT3 upon exposure to ionizing radiations or after long fasting. Post-translationally, polyubiquitinated; leading to proteasomal degradation. Deubiquitinated by USP36 which increases protein stability.

It is found in the mitochondrion matrix. It carries out the reaction 2 superoxide + 2 H(+) = H2O2 + O2. Destroys superoxide anion radicals which are normally produced within the cells and which are toxic to biological systems. The polypeptide is Superoxide dismutase [Mn], mitochondrial (Sod2) (Rattus norvegicus (Rat)).